The following is a 275-amino-acid chain: Diaminopimelate epimerase (275 aa).

Residues Asn-12, Gln-45, and Asn-65 each coordinate substrate. The active-site Proton donor is Cys-74. Substrate is bound by residues 75–76, Asn-158, Asn-191, and 209–210; these read GN and ER. Cys-218 serves as the catalytic Proton acceptor. Residue 219-220 participates in substrate binding; sequence GT.

It belongs to the diaminopimelate epimerase family. In terms of assembly, homodimer.

Its subcellular location is the cytoplasm. The catalysed reaction is (2S,6S)-2,6-diaminopimelate = meso-2,6-diaminopimelate. It participates in amino-acid biosynthesis; L-lysine biosynthesis via DAP pathway; DL-2,6-diaminopimelate from LL-2,6-diaminopimelate: step 1/1. Functionally, catalyzes the stereoinversion of LL-2,6-diaminopimelate (L,L-DAP) to meso-diaminopimelate (meso-DAP), a precursor of L-lysine and an essential component of the bacterial peptidoglycan. This is Diaminopimelate epimerase from Shewanella baltica (strain OS223).